The sequence spans 161 residues: Nucleotide-binding protein Mmc1_1670 (161 aa).

It belongs to the YajQ family.

Functionally, nucleotide-binding protein. This chain is Nucleotide-binding protein Mmc1_1670, found in Magnetococcus marinus (strain ATCC BAA-1437 / JCM 17883 / MC-1).